Reading from the N-terminus, the 643-residue chain is Nucleolar GTP-binding protein 1 (643 aa).

The OBG-type G domain occupies Arg-168 to Leu-340. Residues Gly-174–Ser-181, Asp-220–Ile-224, and Asn-288–Asp-291 contribute to the GTP site. A disordered region spans residues Gly-568–Arg-643. The span at Met-594–Ala-622 shows a compositional bias: basic and acidic residues.

Belongs to the TRAFAC class OBG-HflX-like GTPase superfamily. OBG GTPase family. NOG subfamily.

The protein localises to the nucleus. It is found in the nucleolus. Functionally, involved in the biogenesis of the 60S ribosomal subunit. This Kluyveromyces lactis (strain ATCC 8585 / CBS 2359 / DSM 70799 / NBRC 1267 / NRRL Y-1140 / WM37) (Yeast) protein is Nucleolar GTP-binding protein 1 (NOG1).